The sequence spans 219 residues: ATP phosphoribosyltransferase (219 aa).

This sequence belongs to the ATP phosphoribosyltransferase family. Short subfamily. Heteromultimer composed of HisG and HisZ subunits.

It localises to the cytoplasm. The enzyme catalyses 1-(5-phospho-beta-D-ribosyl)-ATP + diphosphate = 5-phospho-alpha-D-ribose 1-diphosphate + ATP. It functions in the pathway amino-acid biosynthesis; L-histidine biosynthesis; L-histidine from 5-phospho-alpha-D-ribose 1-diphosphate: step 1/9. Functionally, catalyzes the condensation of ATP and 5-phosphoribose 1-diphosphate to form N'-(5'-phosphoribosyl)-ATP (PR-ATP). Has a crucial role in the pathway because the rate of histidine biosynthesis seems to be controlled primarily by regulation of HisG enzymatic activity. The sequence is that of ATP phosphoribosyltransferase from Clostridium kluyveri (strain NBRC 12016).